Reading from the N-terminus, the 252-residue chain is Trans-aconitate 2-methyltransferase (252 aa).

The protein belongs to the methyltransferase superfamily. Tam family.

The protein localises to the cytoplasm. It carries out the reaction trans-aconitate + S-adenosyl-L-methionine = (E)-3-(methoxycarbonyl)pent-2-enedioate + S-adenosyl-L-homocysteine. Functionally, catalyzes the S-adenosylmethionine monomethyl esterification of trans-aconitate. This chain is Trans-aconitate 2-methyltransferase, found in Escherichia coli O6:H1 (strain CFT073 / ATCC 700928 / UPEC).